Here is a 179-residue protein sequence, read N- to C-terminus: Interleukin-10 (179 aa).

The first 19 residues, 1–19 (MPSSSALLCCLVFLAGVAA), serve as a signal peptide directing secretion. 2 cysteine pairs are disulfide-bonded: Cys31–Cys127 and Cys81–Cys133. An N-linked (GlcNAc...) asparagine glycan is attached at Asn135.

It belongs to the IL-10 family. In terms of assembly, homodimer. Interacts with IL10RA and IL10RB.

The protein resides in the secreted. Functionally, major immune regulatory cytokine that acts on many cells of the immune system where it has profound anti-inflammatory functions, limiting excessive tissue disruption caused by inflammation. Mechanistically, IL10 binds to its heterotetrameric receptor comprising IL10RA and IL10RB leading to JAK1 and STAT2-mediated phosphorylation of STAT3. In turn, STAT3 translocates to the nucleus where it drives expression of anti-inflammatory mediators. Targets antigen-presenting cells (APCs) such as macrophages and monocytes and inhibits their release of pro-inflammatory cytokines including granulocyte-macrophage colony-stimulating factor /GM-CSF, granulocyte colony-stimulating factor/G-CSF, IL-1 alpha, IL-1 beta, IL-6, IL-8 and TNF-alpha. Also interferes with antigen presentation by reducing the expression of MHC-class II and co-stimulatory molecules, thereby inhibiting their ability to induce T cell activation. In addition, controls the inflammatory response of macrophages by reprogramming essential metabolic pathways including mTOR signaling. The chain is Interleukin-10 (IL10) from Cervus elaphus (Red deer).